Reading from the N-terminus, the 84-residue chain is Small ribosomal subunit protein bS16 (84 aa).

It belongs to the bacterial ribosomal protein bS16 family.

The chain is Small ribosomal subunit protein bS16 from Burkholderia multivorans (strain ATCC 17616 / 249).